The chain runs to 982 residues: Glutamate [NMDA] receptor subunit 1 (982 aa).

Positions 1–22 (MRVAFIYRWLLCGAAIVNVLVA) are cleaved as a signal peptide. Residues 23-568 (QRHTASDNPS…TLVSFLQPFS (546 aa)) lie on the Extracellular side of the membrane. N-linked (GlcNAc...) asparagine glycosylation is found at Asn253, Asn309, Asn340, Asn392, Asn449, Asn476, and Asn496. Glycine contacts are provided by residues 525–527 (PLT) and Arg532. A helical membrane pass occupies residues 569-589 (NTLWILVMVSVHVVALVLYLL). Over 590–646 (DRFSPFGRFKLSHSDSNEEKALNLSSAVWFAWGVLLNSGIGEGTPRSFSARVLGMVW) the chain is Cytoplasmic. A helical transmembrane segment spans residues 647 to 667 (AGFAMIIVASYTANLAAFLVL). The Extracellular segment spans residues 668–826 (ERPKTKLSGI…KTPNTLGLKN (159 aa)). N-linked (GlcNAc...) asparagine glycosylation is present at Asn688. Glycine contacts are provided by Ser698 and Asp742. Residues 827–847 (MAGVFILVGVGIAGGVGLIII) traverse the membrane as a helical segment. At 848–982 (EVIYKKHQVK…YTSDVSHLVV (135 aa)) the chain is on the cytoplasmic side. Residues 948–982 (LTASQLGLGKTRPQQNPLPPRYSPGYTSDVSHLVV) are disordered. The span at 972-982 (GYTSDVSHLVV) shows a compositional bias: polar residues.

This sequence belongs to the glutamate-gated ion channel (TC 1.A.10.1) family. As to quaternary structure, forms a heteromeric NMDA channel with Nmdar2.

Its subcellular location is the cell membrane. It localises to the postsynaptic cell membrane. The protein localises to the postsynaptic density. Its function is as follows. NMDA receptor subtype of glutamate-gated ion channels with high calcium permeability and voltage-dependent sensitivity to magnesium. Mediated by glycine. This protein plays a key role in synaptic plasticity, synaptogenesis, excitotoxicity, memory acquisition and learning. It mediates neuronal functions in glutamate neurotransmission. Is involved in the cell surface targeting of NMDA receptors. Plays a role in associative learning and in long-term memory consolidation. This is Glutamate [NMDA] receptor subunit 1 from Drosophila grimshawi (Hawaiian fruit fly).